Here is a 285-residue protein sequence, read N- to C-terminus: Integrin alpha-1 (285 aa).

Residues 1 to 285 (ENMTFGTTLV…HYSQDWVMLG (285 aa)) lie on the Extracellular side of the membrane. 4 N-linked (GlcNAc...) asparagine glycosylation sites follow: N2, N40, N208, and N232. One can recognise a VWFA domain in the interval 66-279 (IVLDGSNSIY…QAGFSAHYSQ (214 aa)).

It belongs to the integrin alpha chain family. Heterodimer of an alpha and a beta subunit. Alpha-1 associates with beta-1.

The protein resides in the membrane. Functionally, integrin alpha-1/beta-1 is a receptor for laminin and collagen. It recognizes the proline-hydroxylated sequence G-F-P-G-E-R in collagen. Involved in anchorage-dependent, negative regulation of EGF-stimulated cell growth. The polypeptide is Integrin alpha-1 (ITGA1) (Gallus gallus (Chicken)).